Consider the following 88-residue polypeptide: Transcription factor ILI5 (88 aa).

Positions 1-54 (MSSRRSSRGSISEEEINELISKLQSLLPNSRRRGSSQASTTKLLKETCNYIKSL) constitute a bHLH domain.

The protein belongs to the bHLH protein family. In terms of assembly, interacts with APG.

It is found in the nucleus. Atypical and probable non DNA-binding bHLH transcription factor that acts as a positive regulator of grain size. Binds the transcription repressor APG and forms a heterodimer of antagonistic basic helix-loop-helix transcription factors that regulates grain length and weight by controlling cell elongation in lemma and palea. The protein is Transcription factor ILI5 (ILI5) of Oryza sativa subsp. indica (Rice).